A 680-amino-acid polypeptide reads, in one-letter code: DNA-directed RNA polymerase subunit beta' (680 aa).

Zn(2+) contacts are provided by C69, C71, C87, and C90. 3 residues coordinate Mg(2+): D489, D491, and D493.

Belongs to the RNA polymerase beta' chain family. RpoC1 subfamily. In plastids the minimal PEP RNA polymerase catalytic core is composed of four subunits: alpha, beta, beta', and beta''. When a (nuclear-encoded) sigma factor is associated with the core the holoenzyme is formed, which can initiate transcription. Mg(2+) is required as a cofactor. Zn(2+) serves as cofactor.

The protein resides in the plastid. The protein localises to the chloroplast. The enzyme catalyses RNA(n) + a ribonucleoside 5'-triphosphate = RNA(n+1) + diphosphate. Its function is as follows. DNA-dependent RNA polymerase catalyzes the transcription of DNA into RNA using the four ribonucleoside triphosphates as substrates. The protein is DNA-directed RNA polymerase subunit beta' of Aethionema grandiflorum (Persian stone-cress).